The primary structure comprises 709 residues: Phosphate acetyltransferase (709 aa).

Residues 389–709 form a phosphate acetyltransferase region; the sequence is EFCYRLKILS…TIALTSIQSL (321 aa).

It in the N-terminal section; belongs to the CobB/CobQ family. This sequence in the C-terminal section; belongs to the phosphate acetyltransferase and butyryltransferase family. Homohexamer.

It is found in the cytoplasm. The catalysed reaction is acetyl-CoA + phosphate = acetyl phosphate + CoA. Its pathway is metabolic intermediate biosynthesis; acetyl-CoA biosynthesis; acetyl-CoA from acetate: step 2/2. Its function is as follows. Involved in acetate metabolism. The sequence is that of Phosphate acetyltransferase (pta) from Buchnera aphidicola subsp. Schizaphis graminum (strain Sg).